Reading from the N-terminus, the 734-residue chain is Photosystem I P700 chlorophyll a apoprotein A2 (734 aa).

The next 8 membrane-spanning stretches (helical) occupy residues 46–69 (IFAS…FHVA), 135–158 (LYTG…LHLE), 175–199 (LNHH…HVAI), 273–291 (IAHH…GHTY), 330–353 (LHFQ…QHMY), 369–395 (AALY…IFLT), 417–439 (AIIS…LYVH), and 517–535 (FPVH…LILS). Residues cysteine 559 and cysteine 568 each contribute to the [4Fe-4S] cluster site. The next 2 helical transmembrane spans lie at 575 to 596 (AFYP…HWHW) and 643 to 665 (LSVW…MFLI). Positions 654, 662, and 670 each coordinate chlorophyll a. Tryptophan 671 provides a ligand contact to phylloquinone. Residues 707–727 (LVGLAHFSVGYIFTYAAFPIP) traverse the membrane as a helical segment.

The protein belongs to the PsaA/PsaB family. In terms of assembly, the PsaA/B heterodimer binds the P700 chlorophyll special pair and subsequent electron acceptors. PSI consists of a core antenna complex that captures photons, and an electron transfer chain that converts photonic excitation into a charge separation. The eukaryotic PSI reaction center is composed of at least 11 subunits. It depends on P700 is a chlorophyll a/chlorophyll a' dimer, A0 is one or more chlorophyll a, A1 is one or both phylloquinones and FX is a shared 4Fe-4S iron-sulfur center. as a cofactor.

Its subcellular location is the plastid. The protein localises to the chloroplast thylakoid membrane. It catalyses the reaction reduced [plastocyanin] + hnu + oxidized [2Fe-2S]-[ferredoxin] = oxidized [plastocyanin] + reduced [2Fe-2S]-[ferredoxin]. In terms of biological role, psaA and PsaB bind P700, the primary electron donor of photosystem I (PSI), as well as the electron acceptors A0, A1 and FX. PSI is a plastocyanin-ferredoxin oxidoreductase, converting photonic excitation into a charge separation, which transfers an electron from the donor P700 chlorophyll pair to the spectroscopically characterized acceptors A0, A1, FX, FA and FB in turn. Oxidized P700 is reduced on the lumenal side of the thylakoid membrane by plastocyanin. This is Photosystem I P700 chlorophyll a apoprotein A2 from Selaginella uncinata (Blue spike-moss).